The chain runs to 429 residues: Glutamate-1-semialdehyde 2,1-aminomutase (429 aa).

N6-(pyridoxal phosphate)lysine is present on K272.

This sequence belongs to the class-III pyridoxal-phosphate-dependent aminotransferase family. HemL subfamily. Requires pyridoxal 5'-phosphate as cofactor.

It is found in the cytoplasm. The enzyme catalyses (S)-4-amino-5-oxopentanoate = 5-aminolevulinate. The protein operates within porphyrin-containing compound metabolism; protoporphyrin-IX biosynthesis; 5-aminolevulinate from L-glutamyl-tRNA(Glu): step 2/2. The polypeptide is Glutamate-1-semialdehyde 2,1-aminomutase (Methanothrix thermoacetophila (strain DSM 6194 / JCM 14653 / NBRC 101360 / PT) (Methanosaeta thermophila)).